Reading from the N-terminus, the 91-residue chain is Co-chaperonin GroES (91 aa).

It belongs to the GroES chaperonin family. Heptamer of 7 subunits arranged in a ring. Interacts with the chaperonin GroEL.

Its subcellular location is the cytoplasm. In terms of biological role, together with the chaperonin GroEL, plays an essential role in assisting protein folding. The GroEL-GroES system forms a nano-cage that allows encapsulation of the non-native substrate proteins and provides a physical environment optimized to promote and accelerate protein folding. GroES binds to the apical surface of the GroEL ring, thereby capping the opening of the GroEL channel. The protein is Co-chaperonin GroES of Oenococcus oeni (strain ATCC BAA-331 / PSU-1).